Reading from the N-terminus, the 638-residue chain is Neuroendocrine convertase 2 (638 aa).

The signal sequence occupies residues 1–25 (MKGGCVSQWKAAAGLLFCVTVFASA). A propeptide spanning residues 26-109 (ERPVFTNHFL…QQEGFDRKKR (84 aa)) is cleaved from the precursor. The region spanning 129–453 (QWYLINTGQA…YGVLDAGAMV (325 aa)) is the Peptidase S8 domain. Catalysis depends on charge relay system residues D167 and H208. 2 disulfides stabilise this stretch: C225-C376 and C317-C347. Residue N375 is glycosylated (N-linked (GlcNAc...) asparagine). S384 serves as the catalytic Charge relay system. The P/Homo B domain maps to 461–597 (TVPERFHCVG…TLMLHGSQSA (137 aa)). Cysteines 468 and 494 form a disulfide. Residues N514 and N524 are each glycosylated (N-linked (GlcNAc...) asparagine).

Belongs to the peptidase S8 family. Furin subfamily.

The protein localises to the cytoplasmic vesicle. It localises to the secretory vesicle. Its subcellular location is the secreted. The catalysed reaction is Release of protein hormones and neuropeptides from their precursors, generally by hydrolysis of -Lys-Arg-|- bonds.. Its function is as follows. Serine endopeptidase which is involved in the processing of hormone and other protein precursors at sites comprised of pairs of basic amino acid residues. Responsible for the release of glucagon from proglucagon in pancreatic A cells. This chain is Neuroendocrine convertase 2 (PCSK2), found in Sus scrofa (Pig).